The primary structure comprises 623 residues: Glutamine--fructose-6-phosphate aminotransferase [isomerizing] (623 aa).

The active-site Nucleophile; for GATase activity is the C2. Residues 2 to 228 enclose the Glutamine amidotransferase type-2 domain; that stretch reads CGIVGYIGQA…NDQVVTITAD (227 aa). 2 SIS domains span residues 295–435 and 468–613; these read IDEA…LRGN and LGQD…VDQP. Catalysis depends on K618, which acts as the For Fru-6P isomerization activity.

As to quaternary structure, homodimer.

The protein resides in the cytoplasm. It catalyses the reaction D-fructose 6-phosphate + L-glutamine = D-glucosamine 6-phosphate + L-glutamate. In terms of biological role, catalyzes the first step in hexosamine metabolism, converting fructose-6P into glucosamine-6P using glutamine as a nitrogen source. This Corynebacterium glutamicum (strain ATCC 13032 / DSM 20300 / JCM 1318 / BCRC 11384 / CCUG 27702 / LMG 3730 / NBRC 12168 / NCIMB 10025 / NRRL B-2784 / 534) protein is Glutamine--fructose-6-phosphate aminotransferase [isomerizing].